The following is a 303-amino-acid chain: NAD(+)--arginine ADP-ribosyltransferase Lart1 (303 aa).

It localises to the secreted. It catalyses the reaction L-arginyl-[protein] + NAD(+) = N(omega)-(ADP-D-ribosyl)-L-arginyl-[protein] + nicotinamide + H(+). ADP-ribosyltransferase that targets a specific class of NAD(+)-dependent glutamate dehydrogenase (GDH) enzymes found in fungi and protists, including many natural hosts of Legionella. Acts by targeting a conserved arginine residue in the NAD(+)-binding pocket of GDH, thereby blocking oxidative deamination of glutamate. Lart1 may target amoeba GDH to prevent a conserved stress response. In vitro, acts on Glud2 from the amoeba Dictyostelium discoideum (DdGluD2) and yeast Gdh2p but does not act on human or Legionella GDH homologs. The polypeptide is NAD(+)--arginine ADP-ribosyltransferase Lart1 (Legionella pneumophila subsp. pneumophila (strain Philadelphia 1 / ATCC 33152 / DSM 7513)).